The sequence spans 828 residues: Periplasmic nitrate reductase (828 aa).

Positions 1–31 form a signal peptide, tat-type signal; the sequence is MKLSRRSFMKANAVAAAAAAAGLSVPGVARA. A 4Fe-4S Mo/W bis-MGD-type domain is found at 39–95; the sequence is IKWDKAPCRFCGTGCGVLVGTQQGRVVACQGDPDAPVNRGLNCIKGYFLPKIMYGKD. Cysteine 46, cysteine 49, cysteine 53, and cysteine 81 together coordinate [4Fe-4S] cluster. Mo-bis(molybdopterin guanine dinucleotide) is bound by residues lysine 83, glutamine 150, asparagine 175, cysteine 179, 212-219, 243-247, 262-264, methionine 372, glutamine 376, asparagine 482, 508-509, lysine 531, aspartate 558, and 718-727; these read WGANMAEM, STYQH, QSD, SD, and TGRVLEHWHT. Phenylalanine 794 serves as a coordination point for substrate. Positions 802 and 819 each coordinate Mo-bis(molybdopterin guanine dinucleotide).

It belongs to the prokaryotic molybdopterin-containing oxidoreductase family. NasA/NapA/NarB subfamily. As to quaternary structure, component of the periplasmic nitrate reductase NapAB complex composed of NapA and NapB. The cofactor is [4Fe-4S] cluster. It depends on Mo-bis(molybdopterin guanine dinucleotide) as a cofactor. In terms of processing, predicted to be exported by the Tat system. The position of the signal peptide cleavage has not been experimentally proven.

Its subcellular location is the periplasm. The enzyme catalyses 2 Fe(II)-[cytochrome] + nitrate + 2 H(+) = 2 Fe(III)-[cytochrome] + nitrite + H2O. In terms of biological role, catalytic subunit of the periplasmic nitrate reductase complex NapAB. Receives electrons from NapB and catalyzes the reduction of nitrate to nitrite. This Escherichia coli O7:K1 (strain IAI39 / ExPEC) protein is Periplasmic nitrate reductase.